A 181-amino-acid chain; its full sequence is Reverse rubrerythrin-1 (181 aa).

Residues M1–V35 form the Rubredoxin-like domain. Residues C6, C9, C22, C25, E69, E102, E132, E165, and H168 each contribute to the Fe cation site. Residues K52–K181 form the Ferritin-like diiron domain.

In terms of assembly, homodimer. Fe(3+) is required as a cofactor.

The enzyme catalyses H2O2 + NADH + H(+) = NAD(+) + 2 H2O. Its function is as follows. Functions as the terminal component of an NADH peroxidase (NADH:H(2)O(2) oxidoreductase) when using NADH:rubredoxin oxidoreductase (NROR) and rubredoxin (Rd) as electron transport intermediaries from NADH to revRbr 1. Plays an important role in the oxidative stress defense system in C.acetobutylicum, an obligate anaerobic bacterium. Also exhibits NADH oxidase (NADH:O(2) oxidoreductase) activity in vitro, which is 100-fold lesser than that of FprA1/2 using the same electron transfer components. Therefore, its predominant function is most likely as a scavenger of its preferred substrate, H(2)O(2). The polypeptide is Reverse rubrerythrin-1 (rbr3A) (Clostridium acetobutylicum (strain ATCC 824 / DSM 792 / JCM 1419 / IAM 19013 / LMG 5710 / NBRC 13948 / NRRL B-527 / VKM B-1787 / 2291 / W)).